A 964-amino-acid chain; its full sequence is MSSTRPELKFSDVSEERNFYKKYTGLPKKPLKTIRLVDKGDYYTVIGSDAIFVADSVYHTQSVLKNCQLDPVTAKNFHEPTKYVTVSLQVLATLLKLCLLDLGYKVEIYDKGWKLIKSASPGNIEQVNELMNMNIDSSIIIASLKVQWNSQDGNCIIGVAFIDTTAYKVGMLDIVDNEVYSNLESFLIQLGVKECLVQDLTSNSNSNAEMQKVINVIDRCGCVVTLLKNSEFSEKDVELDLTKLLGDDLALSLPQKYSKLSMGACNALIGYLQLLSEQDQVGKYELVEHKLKEFMKLDASAIKALNLFPQGPQNPFGSNNLAVSGFTSAGNSGKVTSLFQLLNHCKTNAGVRLLNEWLKQPLTNIDEINKRHDLVDYLIDQIELRQMLTSEYLPMIPDIRRLTKKLNKRGNLEDVLKIYQFSKRIPEIVQVFTSFLEDDSPTEPVNELVRSVWLAPLSHHVEPLSKFEEMVETTVDLDAYEENNEFMIKVEFNEELGKIRSKLDTLRDEIHSIHLDSAEDLGFDPDKKLKLENHHLHGWCMRLTRNDAKELRKHKKYIELSTVKAGIFFSTKQLKSIANETNILQKEYDKQQSALVREIINITLTYTPVFEKLSLVLAHLDVIASFAHTSSYAPIPYIRPKLHPMDSERRTHLISSRHPVLEMQDDISFISNDVTLESGKGDFLIITGPNMGGKSTYIRQVGVISLMAQIGCFVPCEEAEIAIVDAILCRVGAGDSQLKGVSTFMVEILETASILKNASKNSLIIVDELGRGTSTYDGFGLAWAIAEHIASKIGCFALFATHFHELTELSEKLPNVKNMHVVAHIEKNLKEQKHDDEDITLLYKVEPGISDQSFGIHVAEVVQFPEKIVKMAKRKANELDDLKTNNEDLKKAKLSLQEVNEGNIRLKALLKEWIRKVKEEGLHDPSKITEEASQHKIQELLRAIANEPEKENDNYLKYIKALLL.

688–695 (GPNMGGKS) is a binding site for ATP. An interaction with MSH6 region spans residues 851–964 (DQSFGIHVAE…YLKYIKALLL (114 aa)).

Belongs to the DNA mismatch repair MutS family. As to quaternary structure, heterodimer consisting of MSH2-MSH6 (MutS alpha) or MSH2-MSH3 (MutS beta). Both heterodimers form a ternary complex with MutL alpha (MLH1-PMS1). MutS beta also forms a ternary complex with MutL beta (MLH1-MLH3), and possibly with a MLH1-MLH2 heterodimer. Both heterodimers interact with proliferating cell nuclear antigen (PCNA/POL30). This interaction is disrupted upon binding of the MutS heterodimers to mismatch DNA. Interacts with SAW1.

It localises to the nucleus. Inhibited by Cd(2+). In terms of biological role, component of the post-replicative DNA mismatch repair system (MMR). Forms two different heterodimers: MutS alpha (MSH2-MSH6 heterodimer) and MutS beta (MSH2-MSH3 heterodimer), which bind to DNA mismatches thereby initiating DNA repair. MSH2 seems to act as a scaffold for the other MutS homologs that provide substrate-binding and substrate specificity. When bound, heterodimers bend the DNA helix and shield approximately 20 base pairs. MutS alpha acts mainly to repair base-base and single insertion-deletion mismatches that occur during replication, but can also repair longer insertion-deletion loops (IDLs), although with decreasing efficiency as the size of the extrahelical loop increases. MutS beta acts mainly to repair IDLs from 2 to 13 nucleotides in size, but can also repair base-base and single insertion-deletion mismatches. After mismatch binding, MutS alpha or beta form a ternary complex with a MutL heterodimer, which is thought to be responsible for directing the downstream MMR events, including strand discrimination, excision, and resynthesis. ATP binding and hydrolysis play a pivotal role in mismatch repair functions. Both subunits bind ATP, but with differing affinities, and their ATPase kinetics are also very different. MSH6 binds and hydrolyzes ATP rapidly, whereas MSH2 catalyzes ATP at a substantially slower rate. Binding to a mismatched base pair suppresses MSH6-catalyzed ATP hydrolysis, but not the activity of MSH2. ATP binding to both subunits is necessary to trigger a change in MutS alpha interaction with mismatched DNA, converting MutS alpha into a sliding clamp capable of hydrolysis-independent movement along DNA, and also facilitates formation of ternary complexes containing MutS and MutL proteins and the mismatch. MutS beta also has a role in regulation of heteroduplex formation during mitotic and meiotic recombination. MutS beta binds to DNA flap structures predicted to form during recombination, and is required for 3' non-homologous tail removal (NHTR). MutS beta-binding alters the DNA conformation of its substrate at the ds/ssDNA junction and may facilitate its recognition and/or cleavage by the downstream nucleotide excision repair (NER) RAD1-RAD10 endonuclease. This is DNA mismatch repair protein MSH2 (MSH2) from Saccharomyces cerevisiae (strain ATCC 204508 / S288c) (Baker's yeast).